We begin with the raw amino-acid sequence, 262 residues long: Cell division protein FtsQ (262 aa).

The Cytoplasmic portion of the chain corresponds to 1–20; the sequence is MSWSDKRRHWRARKSQVNWY. A helical membrane pass occupies residues 21 to 41; sequence LWSGIGFLSLVIGSFVFGGYL. Residues 42-262 are Periplasmic-facing; that stretch reads LHKFLNDAST…EPIINDEKPR (221 aa). One can recognise a POTRA domain in the interval 52–121; the sequence is LPIEAVAIKG…AKLRVYLQEQ (70 aa).

It belongs to the FtsQ/DivIB family. FtsQ subfamily. As to quaternary structure, part of a complex composed of FtsB, FtsL and FtsQ.

It localises to the cell inner membrane. Its function is as follows. Essential cell division protein. May link together the upstream cell division proteins, which are predominantly cytoplasmic, with the downstream cell division proteins, which are predominantly periplasmic. May control correct divisome assembly. The chain is Cell division protein FtsQ from Shewanella oneidensis (strain ATCC 700550 / JCM 31522 / CIP 106686 / LMG 19005 / NCIMB 14063 / MR-1).